Reading from the N-terminus, the 540-residue chain is MGFEELLHKVGGFGPFQLRNLVLLALPRFLLPMHFLLPIFMAAVPAHHCALPDAPANLSHQDLWLKTHLPRETDGSFSSCLRFAYPQALPNVTLGTEVYNSGEPEGEPLTVPCSQGWEYDRSEFSSTIATEWDLVCEQRGLNKVTSTCFFIGVLLGAVVYGYLSDRFGRRRLLLVAYVSTLALGLMSAASVNYIMFVTTRMLTGSALAGFTIIVLPLELEWLDVEHRTVAGVISTTFWTGGVLLLTLVGYLIRSWRWLLLAATLPCVPGIISIWWVPESARWLLTQGRVEEAKKYLSICAKLNGRPISEDSLSQEALNKVITMERVSQRPSYLDLFRTSQLRHVSLCCMMMWFGVNFSYYGLTLDASGLGLTVYQTQLLFGAVEVPSKITVFFLVRLVGRRLTEAGMLLATALTFGISLLVSSDTKSWITALVVIGKAFSEAAFTTAYLFTSELYPTVLRQTGMGFTALIGRLGASLAPLVVLLDGVWLLLPKLAYGGISFLAACTVLLLPETKKAQLPETIQDVERKGRKIDRSGTELA.

The next 12 helical transmembrane spans lie at 21 to 41 (LVLL…PIFM), 144 to 164 (VTST…GYLS), 172 to 192 (LLLV…ASVN), 202 to 222 (LTGS…LEWL), 232 to 252 (VIST…GYLI), 257 to 277 (WLLL…WWVP), 344 to 364 (VSLC…GLTL), 378 to 398 (LLFG…VRLV), 402 to 422 (LTEA…LLVS), 429 to 449 (ITAL…TAYL), 462 to 484 (TGMG…VVLL), and 488 to 510 (WLLL…VLLL).

It belongs to the major facilitator (TC 2.A.1) superfamily. Organic cation transporter (TC 2.A.1.19) family. In terms of tissue distribution, abundant expression in male and female kidney. In kidney, expressed at the brush border of the proximal tubule S3 segment (S3) in the outer stripe and medullary rays. In kidney, expression is higher in female than male. Also expressed in female liver.

It localises to the basolateral cell membrane. Its subcellular location is the apical cell membrane. It is found in the cell membrane. The enzyme catalyses orotate(out) + L-glutamate(in) = orotate(in) + L-glutamate(out). The catalysed reaction is 3',5'-cyclic GMP(in) = 3',5'-cyclic GMP(out). It carries out the reaction GMP(in) = GMP(out). It catalyses the reaction 2'-deoxyguanosine(in) = 2'-deoxyguanosine(out). The enzyme catalyses GDP(in) = GDP(out). The catalysed reaction is guanosine(in) = guanosine(out). It carries out the reaction GTP(in) = GTP(out). It catalyses the reaction 3',5'-cyclic AMP(in) = 3',5'-cyclic AMP(out). The enzyme catalyses creatinine(in) = creatinine(out). The catalysed reaction is prostaglandin E2(out) = prostaglandin E2(in). It carries out the reaction 2-oxoglutarate(in) = 2-oxoglutarate(out). It catalyses the reaction glutarate(in) = glutarate(out). The enzyme catalyses urate(out) = urate(in). The catalysed reaction is estrone 3-sulfate(out) = estrone 3-sulfate(in). Functionally, functions as a Na(+)-independent bidirectional multispecific transporter. Contributes to the renal and hepatic elimination of endogenous organic compounds from the systemic circulation into the urine and bile, respectively. Capable of transporting a wide range of purine and pyrimidine nucleobases, nucleosides, and nucleotides with cGMP, 2'deoxyguanosine and GMP being the preferred substrates. Functions as a pH- and chloride-independent cGMP bidirectional facilitative transporter that can regulate both intracellular and extracellular levels of cGMP and may be involved in cGMP signaling pathways. Mediates orotate/glutamate bidirectional exchange and most likely display a physiological role in hepatic release of glutamate into the blood. Involved in renal secretion and possible reabsorption of creatinine. Able to uptake prostaglandin E2 (PGE2) and may contribute to PGE2 renal excretion. Also transports alpha-ketoglutarate and urate. Unlike human hortolog, able to transport glutarate. Apart from the orotate/glutamate exchange, the counterions for the uptake of other SLC22A7/OAT2 substrates remain to be identified. This Mus musculus (Mouse) protein is Solute carrier family 22 member 7.